The following is a 466-amino-acid chain: MRTNFEWFEEAKRFIPGGVNSPVRAYAAVGGTPRFLAKAQGAYVTDIEGREYVDLVSSWGPLILGHAHPKVIDAVINTAHRGMSYGAPTTLEVELAELVCNRICNAQGIKPVERLRLVSTGTESCMTAIRLARCFTGRDLIVKFSGHYHGHADPFLIDAGSGLVGHPSSGGVPESVAKNTLVVPYNDLAVLEYLFEAYPNQIACIITEACPANMGVIPPDPGFNARVADLGHSHGALIIFDEVITGFRVGSGGFWALETSLASQQPTQAVSEGSVSDSAYSAYVPDLFTFAKVLGGGLPIGAIGGRAEIMDLLSPSGPVYQAGTLSGNPLATAAGLATLRLADSNIYEHMNRVARALINEIQSAFHDAGVPCTVQSAGNLFGISFSAIAPRDFTQATSQEHWRYSNFFHSMLNSGVLLPPSVYEAWFVSAAFDDRAIERVVNALPDAVRAAGSAPARPKGFEPPTF.

Lysine 292 is subject to N6-(pyridoxal phosphate)lysine.

The protein belongs to the class-III pyridoxal-phosphate-dependent aminotransferase family. HemL subfamily. As to quaternary structure, homodimer. Pyridoxal 5'-phosphate is required as a cofactor.

Its subcellular location is the cytoplasm. It catalyses the reaction (S)-4-amino-5-oxopentanoate = 5-aminolevulinate. It functions in the pathway porphyrin-containing compound metabolism; protoporphyrin-IX biosynthesis; 5-aminolevulinate from L-glutamyl-tRNA(Glu): step 2/2. This chain is Glutamate-1-semialdehyde 2,1-aminomutase, found in Tropheryma whipplei (strain TW08/27) (Whipple's bacillus).